A 570-amino-acid polypeptide reads, in one-letter code: Sulfite reductase [NADPH] hemoprotein beta-component (570 aa).

[4Fe-4S] cluster is bound by residues C434, C440, C479, and C483. C483 contacts siroheme.

The protein belongs to the nitrite and sulfite reductase 4Fe-4S domain family. Alpha(8)-beta(8). The alpha component is a flavoprotein, the beta component is a hemoprotein. The cofactor is siroheme. [4Fe-4S] cluster is required as a cofactor.

The catalysed reaction is hydrogen sulfide + 3 NADP(+) + 3 H2O = sulfite + 3 NADPH + 4 H(+). It participates in sulfur metabolism; hydrogen sulfide biosynthesis; hydrogen sulfide from sulfite (NADPH route): step 1/1. Its function is as follows. Component of the sulfite reductase complex that catalyzes the 6-electron reduction of sulfite to sulfide. This is one of several activities required for the biosynthesis of L-cysteine from sulfate. The sequence is that of Sulfite reductase [NADPH] hemoprotein beta-component (cysI) from Salmonella typhimurium (strain LT2 / SGSC1412 / ATCC 700720).